Reading from the N-terminus, the 312-residue chain is MYLSKNFFLNLKTFIFSFFVLCFFSQSAQAYPIFAKQYFSSPREVSGRIACSYCHLAQKPVELSVPQSVFPNTVFEAVIKVPYDKTVKQVSGQGSKFGLNIGAILILPEGFTLAPVDRLSESLKKKTAGLSFLPYNNNNKSTFMVGPVSGDKYDKLVFPVLSPDYGPNTAFLKSAVYVGGNRGRGQIYPNGEKSNNNLFASSSNGVVSEIKSTKNGGFEVVITTNDGNSVVENIGSGATIIVQEGQQVKAEQPLTTDPNVGGFGQSETEIGLQNPIRVQGLLLFSLFILLAQIFLVLKKKQFEKVQLFEMNF.

An N-terminal signal peptide occupies residues 1–30 (MYLSKNFFLNLKTFIFSFFVLCFFSQSAQA). The heme site is built by Y31, C51, C54, and H55. A helical transmembrane segment spans residues 278-298 (VQGLLLFSLFILLAQIFLVLK).

The protein belongs to the cytochrome f family. The 4 large subunits of the cytochrome b6-f complex are cytochrome b6, subunit IV (17 kDa polypeptide, petD), cytochrome f and the Rieske protein, while the 4 small subunits are PetG, PetL, PetM and PetN. The complex functions as a dimer. It depends on heme as a cofactor.

Its subcellular location is the plastid. The protein resides in the chloroplast thylakoid membrane. Functionally, component of the cytochrome b6-f complex, which mediates electron transfer between photosystem II (PSII) and photosystem I (PSI), cyclic electron flow around PSI, and state transitions. In Bigelowiella natans (Pedinomonas minutissima), this protein is Cytochrome f (petA).